A 712-amino-acid polypeptide reads, in one-letter code: Methionine--tRNA ligase (712 aa).

The 'HIGH' region signature appears at 20–30 (PYANGKAHIGH). Cys151, Cys154, Cys163, and Cys167 together coordinate Zn(2+). A 'KMSKS' region motif is present at residues 334 to 338 (KFSKT). Lys337 contributes to the ATP binding site. The disordered stretch occupies residues 559–585 (ANAKKSAAKGGEKEPSKSEGMGPSEEA). In terms of domain architecture, tRNA-binding spans 610–712 (DFAKLDIRVG…KEIKPGSRIR (103 aa)).

It belongs to the class-I aminoacyl-tRNA synthetase family. MetG type 1 subfamily. Homodimer. Requires Zn(2+) as cofactor.

Its subcellular location is the cytoplasm. It carries out the reaction tRNA(Met) + L-methionine + ATP = L-methionyl-tRNA(Met) + AMP + diphosphate. Is required not only for elongation of protein synthesis but also for the initiation of all mRNA translation through initiator tRNA(fMet) aminoacylation. This Methanosarcina acetivorans (strain ATCC 35395 / DSM 2834 / JCM 12185 / C2A) protein is Methionine--tRNA ligase.